A 573-amino-acid polypeptide reads, in one-letter code: Myrcene synthase TPS5FN (573 aa).

Positions 286, 323, 327, 464, and 467 each coordinate (2E)-geranyl diphosphate. Positions 323 and 327 each coordinate Mg(2+). A DDXXD motif motif is present at residues 323-327; the sequence is DDIFD. Residues Asp467, Thr471, and Glu475 each contribute to the Mg(2+) site.

It belongs to the terpene synthase family. Tpsb subfamily. It depends on Mg(2+) as a cofactor. The cofactor is Mn(2+). As to expression, expressed in glandular trichomes two to four weeks after flowering onset.

It carries out the reaction (2E)-geranyl diphosphate = beta-myrcene + diphosphate. It catalyses the reaction (2E)-geranyl diphosphate = (1R,5R)-alpha-pinene + diphosphate. The enzyme catalyses (2E)-geranyl diphosphate = sabinene + diphosphate. The catalysed reaction is (2E)-geranyl diphosphate = (4S)-limonene + diphosphate. It carries out the reaction (2E)-geranyl diphosphate = terpinolene + diphosphate. It catalyses the reaction (2E)-geranyl diphosphate = camphene + diphosphate. It functions in the pathway secondary metabolite biosynthesis; terpenoid biosynthesis. Its function is as follows. Involved in monoterpene (C10) olefins biosynthesis, constituants of cannabinoids and terpenoids-rich resins. Catalyzes mainly the conversion of (2E)-geranyl diphosphate to beta-myrcene, and also produces minor products such as alpha-pinene, camphene, sabinene, limonene and terpinolene. The sequence is that of Myrcene synthase TPS5FN from Cannabis sativa (Hemp).